Here is an 881-residue protein sequence, read N- to C-terminus: Probable intermembrane transport protein HI_1672 (881 aa).

The helical transmembrane segment at 30 to 49 (FWLLPFIALCIGAILFFQIV) threads the bilayer.

This sequence belongs to the PqiB family.

The protein localises to the cell inner membrane. The chain is Probable intermembrane transport protein HI_1672 from Haemophilus influenzae (strain ATCC 51907 / DSM 11121 / KW20 / Rd).